A 491-amino-acid polypeptide reads, in one-letter code: 4,4'-diapolycopen-4-al dehydrogenase (491 aa).

Glu-208 is a catalytic residue.

This sequence belongs to the carotenoid/retinoid oxidoreductase family. CrtN subfamily.

It carries out the reaction all-trans-4,4'-diapolycopen-4-al + A + H2O = all-trans-4,4'-diapolycopen-4-oate + AH2 + H(+). The protein operates within carotenoid biosynthesis. Involved in the biosynthesis of the major C30 carotenoid methyl 4'-[6-O-(acylglycosyl)oxy]-4,4'-diapolycopen-4-oic acid via 4,4'-diapolycopen-4-oic acid intermediate. Catalyzes the oxidation of 4,4'-diapolycopen-4-al to yield 4,4'-diapolycopen-4-oic acid. This is 4,4'-diapolycopen-4-al dehydrogenase from Metabacillus indicus (Bacillus indicus).